Consider the following 271-residue polypeptide: MVGEKLVAYMLVSVLGLALLRSVFGQHMPEEPCSVQILVPGLKGEAGEKGEKGAPGRPGRVGPTGEQGPPGDKGQKGSPGRYGKMGPTGPKGLKGDMGDPGPKGPNGEPGVPCECAPLRKMIGEMDIQVVQLTNELKFIKNAVAGIKETDSKVYLLVKEEKRYREAEVFCQGRGGHLAMPKDAAANRAIAGYVTDAGLSRVYIGINDLEREGHFVYVERSPMTTFSRWREGEPNNAYDDEDCVEMVSSGEWIDVACQLTMYFVCEFDKDTV.

The signal sequence occupies residues Met1 to Gly25. Residues Gly44–Lys103 form the Collagen-like domain. The disordered stretch occupies residues Ala46–Pro112. Residues Glu124 to Glu148 are a coiled coil. Positions Thr149–Glu265 constitute a C-type lectin domain. Disulfide bonds link Cys170–Cys264 and Cys242–Cys256. An a carbohydrate-binding site is contributed by Arg200. Ca(2+) contacts are provided by Asp207, Glu211, Glu232, Asn234, Asn235, Asp238, Glu240, and Asp241. Glu240 contacts a carbohydrate. A carbohydrate is bound by residues Glu244 and Ile252 to Val254. A Ca(2+)-binding site is contributed by Asp253.

The protein belongs to the COLEC10/COLEC11 family. As to quaternary structure, homotrimer; disulfide-linked. Interacts with MASP1; probably triggers the lectin pathway of complement.

Its subcellular location is the secreted. Functionally, lectin that plays a role in innate immunity, apoptosis and embryogenesis. Calcium-dependent lectin that binds self and non-self glycoproteins presenting high mannose oligosaccharides with at least one terminal alpha-1,2-linked mannose epitope. Primarily recognizes the terminal disaccharide of the glycan. Also recognizes a subset of fucosylated glycans and lipopolysaccharides. Plays a role in innate immunity through its ability to bind non-self sugars presented by microorganisms and to activate the complement through the recruitment of MAPS1. Also plays a role in apoptosis through its ability to bind in a calcium-independent manner the DNA present at the surface of apoptotic cells and to activate the complement in response to this binding. Finally, plays a role in development, probably serving as a guidance cue during the migration of neural crest cells and other cell types during embryogenesis. The protein is Collectin-11 (colec11) of Danio rerio (Zebrafish).